We begin with the raw amino-acid sequence, 387 residues long: Involucrin (387 aa).

Disordered regions lie at residues 1–319 and 347–387; these read MSQQ…VHLG and VCIP…LKQE. The span at 28–37 shows a compositional bias: polar residues; the sequence is NTQQDQMKQP. Residues 62–71 show a composition bias toward low complexity; that stretch reads QVPEQECEPQ. Composition is skewed to basic and acidic residues over residues 85-96, 104-115, 147-179, and 231-245; these read KQQEPQEQEVHP, QEQEAHLGKKQE, QEVH…KQLQ, and QLEK…ELHL.

This sequence belongs to the involucrin family. As to quaternary structure, directly or indirectly cross-linked to cornifelin (CNFN). Post-translationally, substrate of transglutaminase. Specific glutamines or lysines are cross-linked to keratins, desmoplakin and to inter involucrin molecules. Keratinocytes of epidermis and other stratified squamous epithelia.

The protein localises to the cytoplasm. Its function is as follows. Part of the insoluble cornified cell envelope (CE) of stratified squamous epithelia. In Cephalopachus bancanus (Western tarsier), this protein is Involucrin (IVL).